The sequence spans 342 residues: Anthranilate phosphoribosyltransferase (342 aa).

5-phospho-alpha-D-ribose 1-diphosphate is bound by residues Gly-79, 82–83 (GD), Thr-87, 89–92 (NIST), 107–115 (KHCNQRISS), and Ser-119. An anthranilate-binding site is contributed by Gly-79. Residue Ser-91 participates in Mg(2+) binding. Position 110 (Asn-110) interacts with anthranilate. Arg-165 provides a ligand contact to anthranilate. Mg(2+) is bound by residues Asp-223 and Glu-224.

Belongs to the anthranilate phosphoribosyltransferase family. As to quaternary structure, homodimer. Mg(2+) serves as cofactor.

It catalyses the reaction N-(5-phospho-beta-D-ribosyl)anthranilate + diphosphate = 5-phospho-alpha-D-ribose 1-diphosphate + anthranilate. The protein operates within amino-acid biosynthesis; L-tryptophan biosynthesis; L-tryptophan from chorismate: step 2/5. In terms of biological role, catalyzes the transfer of the phosphoribosyl group of 5-phosphorylribose-1-pyrophosphate (PRPP) to anthranilate to yield N-(5'-phosphoribosyl)-anthranilate (PRA). The protein is Anthranilate phosphoribosyltransferase of Buchnera aphidicola subsp. Acyrthosiphon pisum (strain 5A).